The sequence spans 297 residues: Cyclin-dependent kinase 1 (297 aa).

N-acetylmethionine is present on M1. Y4 is subject to Phosphotyrosine; by PKR. The Protein kinase domain occupies 4-287 (YTKIEKIGEG…GKMALNHPYF (284 aa)). An N6-acetyllysine; alternate mark is found at K6 and K9. Glycyl lysine isopeptide (Lys-Gly) (interchain with G-Cter in SUMO2); alternate cross-links involve residues K6 and K9. 10-18 (IGEGTYGVV) is an ATP binding site. T14 is modified (phosphothreonine; by PKMYT1). Y15 carries the phosphotyrosine; by PKMYT1, WEE1 and WEE2 modification. Y15 is subject to Phosphotyrosine; by WEE1 and WEE2. Y19 bears the Phosphotyrosine mark. A Glycyl lysine isopeptide (Lys-Gly) (interchain with G-Cter in SUMO2) cross-link involves residue K20. Position 33 (K33) interacts with ATP. S39 carries the post-translational modification Phosphoserine. The residue at position 77 (Y77) is a Phosphotyrosine. D128 acts as the Proton acceptor in catalysis. A Glycyl lysine isopeptide (Lys-Gly) (interchain with G-Cter in SUMO2) cross-link involves residue K139. Position 141 is a phosphothreonine (T141). A Phosphothreonine; by CAK modification is found at T161. At S178 the chain carries Phosphoserine. A Phosphothreonine modification is found at T222. K245 carries the N6-succinyllysine modification. Residue S248 is modified to Phosphoserine.

The protein belongs to the protein kinase superfamily. CMGC Ser/Thr protein kinase family. CDC2/CDKX subfamily. In terms of assembly, forms a stable but non-covalent complex with a regulatory subunit and with a cyclin. Interacts with cyclins-B (CCNB1, CCNB2 and CCNB3) to form a serine/threonine kinase holoenzyme complex also known as maturation promoting factor (MPF). The cyclin subunit imparts substrate specificity to the complex. Can also form CDK1-cylin-D and CDK1-cyclin-E complexes that phosphorylate RB1 in vitro. Binds to RB1 and other transcription factors such as FOXO1 and RUNX2. Promotes G2-M transition when in complex with a cyclin-B. Interacts with DLGAP5. Binds to the CDK inhibitors CDKN1A/p21 and CDKN1B/p27. Isoform 2 is unable to complex with cyclin-B1 and also fails to bind to CDKN1A/p21. Interacts with catalytically active CCNB1 and RALBP1 during mitosis to form an endocytotic complex during interphase. Associates with cyclins-A and B1 during S-phase in regenerating hepatocytes. Interacts with FANCC. Interacts with CEP63; this interaction recruits CDK1 to centrosomes. Interacts with CENPA. Interacts with NR1D1. Phosphorylation at Thr-161 by CAK/CDK7 activates kinase activity. Phosphorylation at Thr-14 and Tyr-15 by PKMYT1 prevents nuclear translocation. Phosphorylation at Tyr-15 by WEE1 and WEE2 inhibits the protein kinase activity and acts as a negative regulator of entry into mitosis (G2 to M transition). Phosphorylation by PKMYT1 and WEE1 takes place during mitosis to keep CDK1-cyclin-B complexes inactive until the end of G2. By the end of G2, PKMYT1 and WEE1 are inactivated, but CDC25A and CDC25B are activated. Dephosphorylation by active CDC25A and CDC25B at Thr-14 and Tyr-15, leads to CDK1 activation at the G2-M transition. Phosphorylation at Tyr-15 by WEE2 during oogenesis is required to maintain meiotic arrest in oocytes during the germinal vesicle (GV) stage, a long period of quiescence at dictyate prophase I, leading to prevent meiotic reentry. Phosphorylation by WEE2 is also required for metaphase II exit during egg activation to ensure exit from meiosis in oocytes and promote pronuclear formation. Phosphorylated at Tyr-4 by PKR/EIF2AK2 upon genotoxic stress. This phosphorylation triggers CDK1 polyubiquitination and subsequent proteolysis, thus leading to G2 arrest. Post-translationally, polyubiquitinated upon genotoxic stress.

It localises to the nucleus. The protein localises to the cytoplasm. Its subcellular location is the mitochondrion. The protein resides in the cytoskeleton. It is found in the microtubule organizing center. It localises to the centrosome. The protein localises to the spindle. It carries out the reaction L-seryl-[protein] + ATP = O-phospho-L-seryl-[protein] + ADP + H(+). The enzyme catalyses L-threonyl-[protein] + ATP = O-phospho-L-threonyl-[protein] + ADP + H(+). The catalysed reaction is [DNA-directed RNA polymerase] + ATP = phospho-[DNA-directed RNA polymerase] + ADP + H(+). With respect to regulation, phosphorylation at Thr-14 or Tyr-15 inactivates the enzyme, while phosphorylation at Thr-161 activates it. Activated through a multistep process; binding to cyclin-B is required for relocation of cyclin-kinase complexes to the nucleus, activated by CAK/CDK7-mediated phosphorylation on Thr-161, and CDC25-mediated dephosphorylation of inhibitory phosphorylation on Thr-14 and Tyr-15. Activity is restricted during S-phase in an ATR-dependent manner to prevent premature entry into G2. Repressed by the CDK inhibitors CDKN1A/p21 and CDKN1B/p27 during the G1 phase and by CDKN1A/p21 at the G1-S checkpoint upon DNA damage. Transient activation by rapid and transient dephosphorylation at Tyr-15 triggered by TGFB1. In terms of biological role, plays a key role in the control of the eukaryotic cell cycle by modulating the centrosome cycle as well as mitotic onset; promotes G2-M transition via association with multiple interphase cyclins. Phosphorylates PARVA/actopaxin, APC, AMPH, APC, BARD1, Bcl-xL/BCL2L1, BRCA2, CALD1, CASP8, CDC7, CDC20, CDC25A, CDC25C, CC2D1A, CENPA, CSNK2 proteins/CKII, FZR1/CDH1, CDK7, CEBPB, CHAMP1, DMD/dystrophin, EEF1 proteins/EF-1, EZH2, KIF11/EG5, EGFR, FANCG, FOS, GFAP, GOLGA2/GM130, GRASP1, UBE2A/hHR6A, HIST1H1 proteins/histone H1, HMGA1, HIVEP3/KRC, KAT5, LMNA, LMNB, LBR, LATS1, MAP1B, MAP4, MARCKS, MCM2, MCM4, MKLP1, MLST8, MYB, NEFH, NFIC, NPC/nuclear pore complex, PITPNM1/NIR2, NPM1, NCL, NUCKS1, NPM1/numatrin, ORC1, PRKAR2A, EEF1E1/p18, EIF3F/p47, p53/TP53, NONO/p54NRB, PAPOLA, PLEC/plectin, RB1, TPPP, UL40/R2, RAB4A, RAP1GAP, RBBP8/CtIP, RCC1, RPS6KB1/S6K1, KHDRBS1/SAM68, ESPL1, SKI, BIRC5/survivin, STIP1, TEX14, beta-tubulins, MAPT/TAU, NEDD1, VIM/vimentin, TK1, FOXO1, RUNX1/AML1, SAMHD1, SIRT2, CGAS and RUNX2. CDK1/CDC2-cyclin-B controls pronuclear union in interphase fertilized eggs. Essential for early stages of embryonic development. During G2 and early mitosis, CDC25A/B/C-mediated dephosphorylation activates CDK1/cyclin complexes which phosphorylate several substrates that trigger at least centrosome separation, Golgi dynamics, nuclear envelope breakdown and chromosome condensation. Once chromosomes are condensed and aligned at the metaphase plate, CDK1 activity is switched off by WEE1- and PKMYT1-mediated phosphorylation to allow sister chromatid separation, chromosome decondensation, reformation of the nuclear envelope and cytokinesis. Phosphorylates KRT5 during prometaphase and metaphase. Inactivated by PKR/EIF2AK2- and WEE1-mediated phosphorylation upon DNA damage to stop cell cycle and genome replication at the G2 checkpoint thus facilitating DNA repair. Reactivated after successful DNA repair through WIP1-dependent signaling leading to CDC25A/B/C-mediated dephosphorylation and restoring cell cycle progression. Catalyzes lamin (LMNA, LMNB1 and LMNB2) phosphorylation at the onset of mitosis, promoting nuclear envelope breakdown. In proliferating cells, CDK1-mediated FOXO1 phosphorylation at the G2-M phase represses FOXO1 interaction with 14-3-3 proteins and thereby promotes FOXO1 nuclear accumulation and transcription factor activity, leading to cell death of postmitotic neurons. The phosphorylation of beta-tubulins regulates microtubule dynamics during mitosis. NEDD1 phosphorylation promotes PLK1-mediated NEDD1 phosphorylation and subsequent targeting of the gamma-tubulin ring complex (gTuRC) to the centrosome, an important step for spindle formation. In addition, CC2D1A phosphorylation regulates CC2D1A spindle pole localization and association with SCC1/RAD21 and centriole cohesion during mitosis. The phosphorylation of Bcl-xL/BCL2L1 after prolongated G2 arrest upon DNA damage triggers apoptosis. In contrast, CASP8 phosphorylation during mitosis prevents its activation by proteolysis and subsequent apoptosis. This phosphorylation occurs in cancer cell lines, as well as in primary breast tissues and lymphocytes. EZH2 phosphorylation promotes H3K27me3 maintenance and epigenetic gene silencing. CALD1 phosphorylation promotes Schwann cell migration during peripheral nerve regeneration. CDK1-cyclin-B complex phosphorylates NCKAP5L and mediates its dissociation from centrosomes during mitosis. Regulates the amplitude of the cyclic expression of the core clock gene BMAL1 by phosphorylating its transcriptional repressor NR1D1, and this phosphorylation is necessary for SCF(FBXW7)-mediated ubiquitination and proteasomal degradation of NR1D1. Phosphorylates EML3 at 'Thr-881' which is essential for its interaction with HAUS augmin-like complex and TUBG1. Phosphorylates CGAS during mitosis, leading to its inhibition, thereby preventing CGAS activation by self DNA during mitosis. Phosphorylates SKA3 during mitosis which promotes SKA3 binding to the NDC80 complex and anchoring of the SKA complex to kinetochores, to enable stable attachment of mitotic spindle microtubules to kinetochores. The polypeptide is Cyclin-dependent kinase 1 (CDK1) (Bos taurus (Bovine)).